The chain runs to 316 residues: MKISYLDFEQSVAELDAKVEELHALNQPGIADDISRLEVKARKELQRIYSKLGAWQTVQVARHPQRPYTMDYVQALFTEVQVLAGDRAFADDQAIIGGLARFNGQPIVWMGHQKGRDTKEKIQRNFGMPRPEGYRKALRLLRLAERFALPVFTFIDTPGAYPGIGAEERGQSEAIARNLAVMSDLAVPIICTVIGEGGSGGALAIGVGDRMLMLEYGVYSVISPEGCASILWKNAAMAAEAAETLGITARRLQGMGLVDEVLAEPLGGAHRDPEAVFALARERFAHHLQELQAMDTSKLLTTRYERLMHYGVVGAA.

A CoA carboxyltransferase C-terminal domain is found at 40-290 (KARKELQRIY…RERFAHHLQE (251 aa)).

Belongs to the AccA family. Acetyl-CoA carboxylase is a heterohexamer composed of biotin carboxyl carrier protein (AccB), biotin carboxylase (AccC) and two subunits each of ACCase subunit alpha (AccA) and ACCase subunit beta (AccD).

The protein resides in the cytoplasm. The catalysed reaction is N(6)-carboxybiotinyl-L-lysyl-[protein] + acetyl-CoA = N(6)-biotinyl-L-lysyl-[protein] + malonyl-CoA. Its pathway is lipid metabolism; malonyl-CoA biosynthesis; malonyl-CoA from acetyl-CoA: step 1/1. In terms of biological role, component of the acetyl coenzyme A carboxylase (ACC) complex. First, biotin carboxylase catalyzes the carboxylation of biotin on its carrier protein (BCCP) and then the CO(2) group is transferred by the carboxyltransferase to acetyl-CoA to form malonyl-CoA. This chain is Acetyl-coenzyme A carboxylase carboxyl transferase subunit alpha, found in Acidithiobacillus ferrooxidans (strain ATCC 23270 / DSM 14882 / CIP 104768 / NCIMB 8455) (Ferrobacillus ferrooxidans (strain ATCC 23270)).